The chain runs to 288 residues: ATP synthase gamma chain (288 aa).

It belongs to the ATPase gamma chain family. In terms of assembly, F-type ATPases have 2 components, CF(1) - the catalytic core - and CF(0) - the membrane proton channel. CF(1) has five subunits: alpha(3), beta(3), gamma(1), delta(1), epsilon(1). CF(0) has three main subunits: a, b and c.

It localises to the cell inner membrane. In terms of biological role, produces ATP from ADP in the presence of a proton gradient across the membrane. The gamma chain is believed to be important in regulating ATPase activity and the flow of protons through the CF(0) complex. The chain is ATP synthase gamma chain from Paracidovorax citrulli (strain AAC00-1) (Acidovorax citrulli).